Reading from the N-terminus, the 251-residue chain is Pyridoxine 5'-phosphate synthase (251 aa).

Asn-7 provides a ligand contact to 3-amino-2-oxopropyl phosphate. 9–10 lines the 1-deoxy-D-xylulose 5-phosphate pocket; it reads DH. Arg-18 lines the 3-amino-2-oxopropyl phosphate pocket. His-43 functions as the Proton acceptor in the catalytic mechanism. 1-deoxy-D-xylulose 5-phosphate contacts are provided by Arg-45 and His-50. Catalysis depends on Glu-70, which acts as the Proton acceptor. Thr-100 lines the 1-deoxy-D-xylulose 5-phosphate pocket. Catalysis depends on His-198, which acts as the Proton donor. Residues Ala-199 and 220-221 contribute to the 3-amino-2-oxopropyl phosphate site; that span reads GH.

Belongs to the PNP synthase family. Homooctamer; tetramer of dimers.

The protein resides in the cytoplasm. It carries out the reaction 3-amino-2-oxopropyl phosphate + 1-deoxy-D-xylulose 5-phosphate = pyridoxine 5'-phosphate + phosphate + 2 H2O + H(+). The protein operates within cofactor biosynthesis; pyridoxine 5'-phosphate biosynthesis; pyridoxine 5'-phosphate from D-erythrose 4-phosphate: step 5/5. Catalyzes the complicated ring closure reaction between the two acyclic compounds 1-deoxy-D-xylulose-5-phosphate (DXP) and 3-amino-2-oxopropyl phosphate (1-amino-acetone-3-phosphate or AAP) to form pyridoxine 5'-phosphate (PNP) and inorganic phosphate. The polypeptide is Pyridoxine 5'-phosphate synthase (Aromatoleum aromaticum (strain DSM 19018 / LMG 30748 / EbN1) (Azoarcus sp. (strain EbN1))).